Consider the following 132-residue polypeptide: Fatty acid-binding protein, brain (132 aa).

Residue valine 2 is modified to N-acetylvaline. 127–129 (RHY) is an a fatty acid binding site.

Belongs to the calycin superfamily. Fatty-acid binding protein (FABP) family. As to expression, expressed in brain and other neural tissues.

The protein localises to the cytoplasm. Functionally, B-FABP could be involved in the transport of a so far unknown hydrophobic ligand with potential morphogenic activity during CNS development. It is required for the establishment of the radial glial fiber system in developing brain, a system that is necessary for the migration of immature neurons to establish cortical layers. This Homo sapiens (Human) protein is Fatty acid-binding protein, brain (FABP7).